The chain runs to 290 residues: ATP synthase gamma chain (290 aa).

It belongs to the ATPase gamma chain family. As to quaternary structure, F-type ATPases have 2 components, CF(1) - the catalytic core - and CF(0) - the membrane proton channel. CF(1) has five subunits: alpha(3), beta(3), gamma(1), delta(1), epsilon(1). CF(0) has three main subunits: a, b and c.

It localises to the cell inner membrane. Its function is as follows. Produces ATP from ADP in the presence of a proton gradient across the membrane. The gamma chain is believed to be important in regulating ATPase activity and the flow of protons through the CF(0) complex. The sequence is that of ATP synthase gamma chain from Phenylobacterium zucineum (strain HLK1).